Consider the following 428-residue polypeptide: Probable glucose-6-phosphate isomerase (428 aa).

The Proton donor role is filled by Glu269. Active-site residues include His290 and Lys401.

Belongs to the GPI family.

Its subcellular location is the cytoplasm. It carries out the reaction alpha-D-glucose 6-phosphate = beta-D-fructose 6-phosphate. It functions in the pathway carbohydrate biosynthesis; gluconeogenesis. It participates in carbohydrate degradation; glycolysis; D-glyceraldehyde 3-phosphate and glycerone phosphate from D-glucose: step 2/4. In terms of biological role, catalyzes the reversible isomerization of glucose-6-phosphate to fructose-6-phosphate. This Natronomonas pharaonis (strain ATCC 35678 / DSM 2160 / CIP 103997 / JCM 8858 / NBRC 14720 / NCIMB 2260 / Gabara) (Halobacterium pharaonis) protein is Probable glucose-6-phosphate isomerase.